The following is a 1236-amino-acid chain: DNA-directed RNA polymerase subunit beta (1236 aa).

The segment at 1193-1212 is disordered; it reads PDVLDDDSYDQNNDEDIDEI. Residues 1194-1212 are compositionally biased toward acidic residues; the sequence is DVLDDDSYDQNNDEDIDEI.

It belongs to the RNA polymerase beta chain family. In terms of assembly, the RNAP catalytic core consists of 2 alpha, 1 beta, 1 beta' and 1 omega subunit. When a sigma factor is associated with the core the holoenzyme is formed, which can initiate transcription.

It catalyses the reaction RNA(n) + a ribonucleoside 5'-triphosphate = RNA(n+1) + diphosphate. Functionally, DNA-dependent RNA polymerase catalyzes the transcription of DNA into RNA using the four ribonucleoside triphosphates as substrates. This is DNA-directed RNA polymerase subunit beta from Clostridium beijerinckii (strain ATCC 51743 / NCIMB 8052) (Clostridium acetobutylicum).